Here is a 707-residue protein sequence, read N- to C-terminus: DNA-binding protein RFX2 (707 aa).

A Phosphoserine modification is found at serine 33. The segment at residues 204 to 279 (HLQWLLDNYE…YHYYGIRLKP (76 aa)) is a DNA-binding region (RFX-type winged-helix). Residues 297-337 (QQPVHQKPRYRPAQKTDSLGESGSHSSLHSTPEQAMAAQSQ) are disordered. Residues 315–337 (LGESGSHSSLHSTPEQAMAAQSQ) show a composition bias toward low complexity. Serine 420 carries the phosphoserine modification.

The protein belongs to the RFX family. In terms of assembly, homodimer; probably only forms homodimers in testis. Heterodimer; heterodimerizes with RFX1 and RFX3.

Its subcellular location is the nucleus. It localises to the cytoplasm. In terms of biological role, transcription factor that acts as a key regulator of spermatogenesis. Acts by regulating expression of genes required for the haploid phase during spermiogenesis, such as genes required for cilium assembly and function. Recognizes and binds the X-box, a regulatory motif with DNA sequence 5'-GTNRCC(0-3N)RGYAAC-3' present on promoters. Probably activates transcription of the testis-specific histone gene H1-6. This Bos taurus (Bovine) protein is DNA-binding protein RFX2 (RFX2).